The primary structure comprises 385 residues: MRVTHLSLTDFRNYGTAEVHFEAGANLFVGRNGQGKTNLVESLGYLSALGSHRVSSDQAMIRQGAELAVVRARIQHEARELLVEVQLNRGAANRAQVNRAAIKPRELPRYFSSVLFAPEDLALVRGEPGVRRRFLDQLLIQRNPRLSAVIAEYERVLKQRNTLLKSARASRFREDQLGTLDIWDDRLLTLGAELINARLDLMARLSNPLVAAYRSVAGDDHHPRLLPQLTISGAHVEDEDDDSVADMTSAFGDTTDVFRQALAGVRWKELERGLTLVGPHRDDVLFELNGLPAKGYASHGESWSFALALKLASAELLRRESVTGDPVLILDDVFAELDWARRRMLATTVAGYEQVLITAAVYEDVPAELAAHTIRIEAGAIVEPS.

30–37 serves as a coordination point for ATP; the sequence is GRNGQGKT.

Belongs to the RecF family.

It localises to the cytoplasm. Its function is as follows. The RecF protein is involved in DNA metabolism; it is required for DNA replication and normal SOS inducibility. RecF binds preferentially to single-stranded, linear DNA. It also seems to bind ATP. This Leifsonia xyli subsp. xyli (strain CTCB07) protein is DNA replication and repair protein RecF.